The sequence spans 151 residues: Transcriptional repressor NrdR (151 aa).

The segment at 3–34 (CPFCSHPDTQVVETREAEDGGFIRRRRQCGGC) is a zinc-finger region. In terms of domain architecture, ATP-cone spans 49–139 (PAIVKKDGRR…VYRSFEDVDD (91 aa)).

The protein belongs to the NrdR family. Zn(2+) is required as a cofactor.

Its function is as follows. Negatively regulates transcription of bacterial ribonucleotide reductase nrd genes and operons by binding to NrdR-boxes. In Delftia acidovorans (strain DSM 14801 / SPH-1), this protein is Transcriptional repressor NrdR.